We begin with the raw amino-acid sequence, 291 residues long: Cell division protein ZipA (291 aa).

Residues 1-5 (MQELR) are Periplasmic-facing. Residues 6–26 (FVLIIVGALAIAALLFHGLWT) traverse the membrane as a helical segment. The Cytoplasmic segment spans residues 27 to 291 (SKKEGKSKFG…QEFKVRAAQA (265 aa)). A compositionally biased stretch (basic and acidic residues) spans 29–51 (KEGKSKFGDKPLRKMKVESDDPP). Disordered regions lie at residues 29–61 (KEGK…EDDF) and 92–119 (ELDE…VQPQ).

Belongs to the ZipA family. In terms of assembly, interacts with FtsZ via their C-terminal domains.

The protein resides in the cell inner membrane. Its function is as follows. Essential cell division protein that stabilizes the FtsZ protofilaments by cross-linking them and that serves as a cytoplasmic membrane anchor for the Z ring. Also required for the recruitment to the septal ring of downstream cell division proteins. In Vibrio cholerae serotype O1 (strain ATCC 39541 / Classical Ogawa 395 / O395), this protein is Cell division protein ZipA.